The sequence spans 84 residues: UPF0297 protein Csac_1773 (84 aa).

This sequence belongs to the UPF0297 family.

The sequence is that of UPF0297 protein Csac_1773 from Caldicellulosiruptor saccharolyticus (strain ATCC 43494 / DSM 8903 / Tp8T 6331).